A 310-amino-acid polypeptide reads, in one-letter code: Ribosomal RNA small subunit methyltransferase H (310 aa).

Residues Ala33–His35, Asp53, Phe79, Asp100, and Gln107 contribute to the S-adenosyl-L-methionine site.

Belongs to the methyltransferase superfamily. RsmH family.

It localises to the cytoplasm. It carries out the reaction cytidine(1402) in 16S rRNA + S-adenosyl-L-methionine = N(4)-methylcytidine(1402) in 16S rRNA + S-adenosyl-L-homocysteine + H(+). Its function is as follows. Specifically methylates the N4 position of cytidine in position 1402 (C1402) of 16S rRNA. This Clostridium tetani (strain Massachusetts / E88) protein is Ribosomal RNA small subunit methyltransferase H.